The following is a 1030-amino-acid chain: MANLLQNPDIYGDRILFTCCDELWEYSLSTGEKKRLTSHLGVVNNARYYDNGTKVVFRVMFGQSLDAADLFSIDLKSGELKRLTFITGKSVGRRKFTDVAGFSKDGSIIVSTDAFQPFSVPMLYKLGDDGSLDPLNLGPAVHYIEKNGRIYIGRDTYDLPHWKEYKGGTRGKIWSGTIEKGFKKIIDLENHISCPVIVKDRIYFITDIDGAGNIYSTNLDGNDLKKHTDFHEYYPRHLNTDGKTIVFSMGGDIYTFDPTNDNVKSLDIGPVFDTDLNQSYAPSKFLEDFSMSPGDMYSTVSRGKAFIFNENVNYSIPVKSDGRVRYSRFLSKNEISLVIGDKDGDSIGVFDAGTGEMKRKIGPLGNIFSVKSSADGKYLVVGNDNFQILLIDVSNGTVKEIDQSREGLIVDFAISKDSRFIAYSFPVKSSDLASYVQRHIKLFDMLNDKHYDVTTETANDFAPAFDADTNYLYYLSNRSLDPSTDRFTFNFGYLNITRPFVVPLKKGYVSPARNMPQDIEPEKGEYDLERLKYISEPLPVDQADYRSITPLKDGVLLFSVPIHGEFSSYYSGQPEKGIIVKFEFKDKKVKEIKKEVVDFKISTDGSKIMFSKQDGKLYTFRMEKPEEEKSLNIDAITIVSNVKEDFAEMYDEAWKLARDNYWDKEHALTISEKIYERYRKLVERCVTRWDLSYLITEIQGEYRTSHSYEMGGYFTDIDMPRAGRIACDFKYSNGEYVISDILYGDPSNENEKSPFLLSTLDADIGDAVIEIDGIPIGKGKSIYEALVGKGNRSVLVKIRKKDNSVRSGFVDVLQDDRYIRYRAWVEKNKKFVHERTNGRIGYIHIPDMGIMGLNEFYRQYVTEASRNGLIVDVRFNGGGFVSQLILEKLYMKRLGYDNPRRGTLEPYPMNSIEGPMIAITNEYAGSDGDIFSYSFKALHLGTLIGTRTWGGVVGISPRRKLIDGTVLSQPEYAFWFKGSGFSVENYGVDPDVVIEYPPEMYNVNVDPQLERAIEMVLADLEKYKIELPKK.

The tract at residues 1–270 (MANLLQNPDI…DNVKSLDIGP (270 aa)) is six-bladed beta propeller. The binds the substrate's C-terminus stretch occupies residues 93–94 (RR). The seven-bladed beta propeller stretch occupies residues 286–635 (LEDFSMSPGD…EEEKSLNIDA (350 aa)). A C-1 region spans residues 641 to 712 (NVKEDFAEMY…RTSHSYEMGG (72 aa)). Residue H706 is the Charge relay system of the active site. Residues 721–816 (RAGRIACDFK…SGFVDVLQDD (96 aa)) form a PDZ-like region. The tract at residues 817–1022 (RYIRYRAWVE…IEMVLADLEK (206 aa)) is C-2. Substrate is bound at residue 877-879 (GGG). The Nucleophile role is filled by S926. 954 to 956 (GIS) contributes to the substrate binding site. E984 acts as the Charge relay system in catalysis.

This sequence belongs to the peptidase S41B family. As to quaternary structure, part of the tricorn proteolytic complex.

It is found in the cytoplasm. Functionally, tricorn degrades oligopeptides in a sequential manner. The sequence is that of Tricorn protease (tri) from Thermoplasma volcanium (strain ATCC 51530 / DSM 4299 / JCM 9571 / NBRC 15438 / GSS1).